Reading from the N-terminus, the 212-residue chain is Phosphoribosylglycinamide formyltransferase (212 aa).

12–14 (GTN) serves as a coordination point for N(1)-(5-phospho-beta-D-ribosyl)glycinamide. (6R)-10-formyltetrahydrofolate-binding positions include 90–93 (MKIL) and asparagine 107. Histidine 109 (proton donor) is an active-site residue.

It belongs to the GART family.

It catalyses the reaction N(1)-(5-phospho-beta-D-ribosyl)glycinamide + (6R)-10-formyltetrahydrofolate = N(2)-formyl-N(1)-(5-phospho-beta-D-ribosyl)glycinamide + (6S)-5,6,7,8-tetrahydrofolate + H(+). It participates in purine metabolism; IMP biosynthesis via de novo pathway; N(2)-formyl-N(1)-(5-phospho-D-ribosyl)glycinamide from N(1)-(5-phospho-D-ribosyl)glycinamide (10-formyl THF route): step 1/1. Functionally, catalyzes the transfer of a formyl group from 10-formyltetrahydrofolate to 5-phospho-ribosyl-glycinamide (GAR), producing 5-phospho-ribosyl-N-formylglycinamide (FGAR) and tetrahydrofolate. The polypeptide is Phosphoribosylglycinamide formyltransferase (Haemophilus influenzae (strain ATCC 51907 / DSM 11121 / KW20 / Rd)).